Reading from the N-terminus, the 191-residue chain is Protein GrpE (191 aa).

The protein belongs to the GrpE family. In terms of assembly, homodimer.

Its subcellular location is the cytoplasm. Participates actively in the response to hyperosmotic and heat shock by preventing the aggregation of stress-denatured proteins, in association with DnaK and GrpE. It is the nucleotide exchange factor for DnaK and may function as a thermosensor. Unfolded proteins bind initially to DnaJ; upon interaction with the DnaJ-bound protein, DnaK hydrolyzes its bound ATP, resulting in the formation of a stable complex. GrpE releases ADP from DnaK; ATP binding to DnaK triggers the release of the substrate protein, thus completing the reaction cycle. Several rounds of ATP-dependent interactions between DnaJ, DnaK and GrpE are required for fully efficient folding. This is Protein GrpE from Nitratidesulfovibrio vulgaris (strain ATCC 29579 / DSM 644 / CCUG 34227 / NCIMB 8303 / VKM B-1760 / Hildenborough) (Desulfovibrio vulgaris).